The chain runs to 546 residues: Chaperonin GroEL (546 aa).

Residues 30 to 33, K51, 87 to 91, G415, 479 to 481, and D495 each bind ATP; these read TLGP, DGTTT, and NAA. A disordered region spans residues 526–546; it reads KKDEPAMPAGGGMGGMGGMDF. The span at 534-546 shows a compositional bias: gly residues; that stretch reads AGGGMGGMGGMDF.

It belongs to the chaperonin (HSP60) family. As to quaternary structure, forms a cylinder of 14 subunits composed of two heptameric rings stacked back-to-back. Interacts with the co-chaperonin GroES.

It is found in the cytoplasm. It catalyses the reaction ATP + H2O + a folded polypeptide = ADP + phosphate + an unfolded polypeptide.. Its function is as follows. Together with its co-chaperonin GroES, plays an essential role in assisting protein folding. The GroEL-GroES system forms a nano-cage that allows encapsulation of the non-native substrate proteins and provides a physical environment optimized to promote and accelerate protein folding. This Xanthomonas campestris pv. campestris (strain 8004) protein is Chaperonin GroEL.